The sequence spans 125 residues: Protein ApaG (125 aa).

The 125-residue stretch at 1-125 folds into the ApaG domain; the sequence is MIEQPRICVQ…FRLAIPALIH (125 aa).

The polypeptide is Protein ApaG (Yersinia pseudotuberculosis serotype IB (strain PB1/+)).